The sequence spans 135 residues: Small ribosomal subunit protein uS9 (135 aa).

Positions 107–118 are enriched in basic and acidic residues; it reads LVGDPRRTEPHK. The tract at residues 107 to 135 is disordered; it reads LVGDPRRTEPHKPNRSTKGPRAKRQKSYR. The segment covering 119–135 has biased composition (basic residues); sequence PNRSTKGPRAKRQKSYR.

The protein belongs to the universal ribosomal protein uS9 family. In terms of assembly, part of the 30S ribosomal subunit.

This Pyrococcus furiosus (strain ATCC 43587 / DSM 3638 / JCM 8422 / Vc1) protein is Small ribosomal subunit protein uS9.